We begin with the raw amino-acid sequence, 274 residues long: Phosphatidylglycerol--prolipoprotein diacylglyceryl transferase (274 aa).

4 helical membrane-spanning segments follow: residues 19–39 (VGSV…VLGL), 59–79 (LAIW…VLFQ), 93–113 (IWRG…AALI), and 120–140 (VSFW…QAIG). Arg-141 serves as a coordination point for a 1,2-diacyl-sn-glycero-3-phospho-(1'-sn-glycerol). Helical transmembrane passes span 181 to 201 (TFLY…ALFF), 209 to 229 (GTIF…IEGL), and 243 to 263 (QVVS…LYLL).

Belongs to the Lgt family.

Its subcellular location is the cell inner membrane. The catalysed reaction is L-cysteinyl-[prolipoprotein] + a 1,2-diacyl-sn-glycero-3-phospho-(1'-sn-glycerol) = an S-1,2-diacyl-sn-glyceryl-L-cysteinyl-[prolipoprotein] + sn-glycerol 1-phosphate + H(+). It functions in the pathway protein modification; lipoprotein biosynthesis (diacylglyceryl transfer). Catalyzes the transfer of the diacylglyceryl group from phosphatidylglycerol to the sulfhydryl group of the N-terminal cysteine of a prolipoprotein, the first step in the formation of mature lipoproteins. The polypeptide is Phosphatidylglycerol--prolipoprotein diacylglyceryl transferase (Acaryochloris marina (strain MBIC 11017)).